The chain runs to 186 residues: Adrenodoxin, mitochondrial (186 aa).

The N-terminal 58 residues, Met-1–Gln-58, are a transit peptide targeting the mitochondrion. The residue at position 61 (Ser-61) is a Phosphoserine. Lys-64 carries the post-translational modification N6-acetyllysine; alternate. Position 64 is an N6-succinyllysine; alternate (Lys-64). Residues Ile-65–Val-169 form the 2Fe-2S ferredoxin-type domain. Residues Cys-104, Cys-110, Cys-113, and Cys-150 each coordinate [2Fe-2S] cluster. Lys-156 bears the N6-succinyllysine mark. Ser-175 bears the Phosphoserine mark.

Belongs to the adrenodoxin/putidaredoxin family. As to quaternary structure, interacts with CYP11A1. [2Fe-2S] cluster serves as cofactor. As to expression, detected in adrenal cortex and corpus luteum (at protein level).

The protein localises to the mitochondrion matrix. Essential for the synthesis of various steroid hormones. Participates in the reduction of mitochondrial cytochrome P450 for steroidogenesis. Transfers electrons from adrenodoxin reductase to CYP11A1, a cytochrome P450 that catalyzes cholesterol side-chain cleavage to produce pregnenolone, the precursor of most steroid hormones. Does not form a ternary complex with adrenodoxin reductase and CYP11A1 but shuttles between the two enzymes to transfer electrons. The chain is Adrenodoxin, mitochondrial (FDX1) from Bos taurus (Bovine).